A 628-amino-acid chain; its full sequence is Isoleucine--tRNA ligase (628 aa).

The 'KMSKS' region motif lies at 505-509 (KMSKR). Lys-508 lines the ATP pocket.

It belongs to the class-I aminoacyl-tRNA synthetase family.

The enzyme catalyses tRNA(Ile) + L-isoleucine + ATP = L-isoleucyl-tRNA(Ile) + AMP + diphosphate. This chain is Isoleucine--tRNA ligase, found in Antonospora locustae (Microsporidian parasite).